Here is a 90-residue protein sequence, read N- to C-terminus: MTRMVNCVKMEQELEGLDFPPFPGDLGQKIYENVSKEAWKQWLAQQTILINEYRLSSLDPKAQNFLKEEMQKFLFGGEDLEMPEEFQAID.

Belongs to the Fe(2+)-trafficking protein family.

Functionally, could be a mediator in iron transactions between iron acquisition and iron-requiring processes, such as synthesis and/or repair of Fe-S clusters in biosynthetic enzymes. The sequence is that of Probable Fe(2+)-trafficking protein from Hydrogenovibrio crunogenus (strain DSM 25203 / XCL-2) (Thiomicrospira crunogena).